The sequence spans 49 residues: Large ribosomal subunit protein bL33C (49 aa).

The protein belongs to the bacterial ribosomal protein bL33 family.

This is Large ribosomal subunit protein bL33C from Bacillus pumilus (strain SAFR-032).